Reading from the N-terminus, the 203-residue chain is Putative archaetidylserine decarboxylase proenzyme (203 aa).

The active-site Schiff-base intermediate with substrate; via pyruvic acid is the Ser171. Ser171 carries the pyruvic acid (Ser); by autocatalysis modification.

The protein belongs to the phosphatidylserine decarboxylase family. PSD-A subfamily. As to quaternary structure, heterodimer of a large membrane-associated beta subunit and a small pyruvoyl-containing alpha subunit. It depends on pyruvate as a cofactor. Post-translationally, is synthesized initially as an inactive proenzyme. Formation of the active enzyme involves a self-maturation process in which the active site pyruvoyl group is generated from an internal serine residue via an autocatalytic post-translational modification. Two non-identical subunits are generated from the proenzyme in this reaction, and the pyruvate is formed at the N-terminus of the alpha chain, which is derived from the carboxyl end of the proenzyme. The post-translation cleavage follows an unusual pathway, termed non-hydrolytic serinolysis, in which the side chain hydroxyl group of the serine supplies its oxygen atom to form the C-terminus of the beta chain, while the remainder of the serine residue undergoes an oxidative deamination to produce ammonia and the pyruvoyl prosthetic group on the alpha chain.

The protein resides in the cell membrane. It catalyses the reaction archaetidylserine + H(+) = archaetidylethanolamine + CO2. Functionally, catalyzes the formation of archaetidylethanolamine (PtdEtn) from archaetidylserine (PtdSer). The protein is Putative archaetidylserine decarboxylase proenzyme of Methanosarcina barkeri (strain Fusaro / DSM 804).